The sequence spans 99 residues: MKTIDPRHYDVIVAPVVTEKATIASEHNKVVFKVASKATKPQIKEAVEKLFDVKVKSVNTLVRKGKTKVFRGQFGSQSDVKRAIVTLEEGHRIDVTTGL.

Belongs to the universal ribosomal protein uL23 family. In terms of assembly, part of the 50S ribosomal subunit. Contacts protein L29, and trigger factor when it is bound to the ribosome.

Functionally, one of the early assembly proteins it binds 23S rRNA. One of the proteins that surrounds the polypeptide exit tunnel on the outside of the ribosome. Forms the main docking site for trigger factor binding to the ribosome. The sequence is that of Large ribosomal subunit protein uL23 from Rhodopseudomonas palustris (strain BisB18).